A 135-amino-acid polypeptide reads, in one-letter code: Centromere protein S (135 aa).

Residues 103 to 135 are disordered; sequence SLEQKEKKKKKSVSGGNVSRNSDMDTVVPESKD.

The protein belongs to the TAF9 family. CENP-S/MHF1 subfamily. As to quaternary structure, heterodimer with CENPX, sometimes called MHF; this interaction stabilizes both partners. MHF heterodimers can assemble to form tetrameric structures. MHF also coassemble with CENPT-CENPW heterodimers at centromeres to form the tetrameric CENP-T-W-S-X complex. Forms a discrete complex with FANCM and CENPX, called FANCM-MHF; this interaction, probably mediated by direct binding between CENPS and FANCM, leads to synergistic activation of double-stranded DNA binding and strongly stimulates FANCM-mediated DNA remodeling. Recruited by FANCM to the Fanconi anemia (FA) core complex, which consists of CENPS, CENPX, FANCA, FANCB, FANCC, FANCE, FANCF, FANCG, FANCL, FANCM, FAAP24 and FAAP100. The FA core complex associates with Bloom syndrome (BLM) complex, which consists of at least BLM, DNA topoisomerase 3-alpha (TOP3A), RMI1/BLAP75, RPA1/RPA70 and RPA2/RPA32. The super complex between FA and BLM is called BRAFT. Component of the CENPA-CAD complex, composed of CENPI, CENPK, CENPL, CENPO, CENPP, CENPQ, CENPR and CENPS. The CENPA-CAD complex is probably recruited on centromeres by the CENPA-NAC complex, at least composed of CENPA, CENPC, CENPH, CENPM, CENPN, CENPT and CENPU.

The protein localises to the nucleus. Its subcellular location is the chromosome. It localises to the centromere. It is found in the kinetochore. Its function is as follows. DNA-binding component of the Fanconi anemia (FA) core complex. Required for the normal activation of the FA pathway, leading to monoubiquitination of the FANCI-FANCD2 complex in response to DNA damage, cellular resistance to DNA cross-linking drugs, and prevention of chromosomal breakage. In complex with CENPX (MHF heterodimer), crucial cofactor for FANCM in both binding and ATP-dependent remodeling of DNA. Stabilizes FANCM. In complex with CENPX and FANCM (but not other FANC proteins), rapidly recruited to blocked forks and promotes gene conversion at blocked replication forks. In complex with CENPT, CENPW and CENPX (CENP-T-W-S-X heterotetramer), involved in the formation of a functional kinetochore outer plate, which is essential for kinetochore-microtubule attachment and faithful mitotic progression. As a component of MHF and CENP-T-W-S-X complexes, binds DNA and bends it to form a nucleosome-like structure. DNA-binding function is fulfilled in the presence of CENPX, with the following preference for DNA substates: Holliday junction &gt; double-stranded &gt; splay arm &gt; single-stranded. Does not bind DNA on its own. The chain is Centromere protein S (cenps) from Xenopus laevis (African clawed frog).